We begin with the raw amino-acid sequence, 488 residues long: Teichuronic acid biosynthesis protein TuaE (488 aa).

The next 14 membrane-spanning stretches (helical) occupy residues 7–29 (AVHT…GAIH), 35–57 (MQMA…ATAF), 64–86 (FMAV…AIHL), 91–110 (LFLY…FGMV), 122–144 (LQVK…SLLW), 154–173 (YLAL…MYVQ), 180–202 (IVYA…NHIT), 222–244 (PTSV…FFYI), 257–274 (AIGL…FATG), 279–298 (LLGI…PPVL), 303–322 (IWLS…SKIY), 354–376 (NAWH…SYYL), 397–419 (ILAN…LIWV), and 459–476 (LFFH…VNVL).

Its subcellular location is the cell membrane. It participates in cell wall biogenesis; teichuronic acid biosynthesis. Functionally, might be involved in the polymerization of teichuronic acid repeating units after their translocation to the outer surface of the membrane. The polypeptide is Teichuronic acid biosynthesis protein TuaE (tuaE) (Bacillus subtilis (strain 168)).